We begin with the raw amino-acid sequence, 937 residues long: AP-2 complex subunit beta (937 aa).

Threonine 2 carries the N-acetylthreonine modification. The residue at position 4 (serine 4) is a Phosphoserine. Lysine 265 carries the N6-acetyllysine modification. The tract at residues 593–617 is disordered; that stretch reads LPIHHGSTDAGDSPVGTTTTTNLEQ. A compositionally biased stretch (polar residues) spans 607-617; sequence VGTTTTTNLEQ. Phosphotyrosine is present on residues tyrosine 737 and tyrosine 928.

The protein belongs to the adaptor complexes large subunit family. As to quaternary structure, adaptor protein complex 2 (AP-2) is a heterotetramer composed of two large adaptins (alpha-type subunit AP2A1 or AP2A2 and beta-type subunit AP2B1), a medium adaptin (mu-type subunit AP2M1) and a small adaptin (sigma-type subunit AP2S1). Interacts with EPN1. Interacts with EPS15; clathrin competes with EPS15. Interacts with SNAP91; clathrin competes with SNAP91. Interacts with CLTC; clathrin competes with EPS15, SNAP91 and PIP5K1C. Interacts with LDLRAP1. Interacts with AMPH and BIN1. Interacts with ARF6 (GDP-bound). Interacts (dephosphorylated at Tyr-737) with ARRB1; phosphorylation of AP2B1 at Tyr-737 disrupts the interaction. Interacts with SLC2A8. Interacts with SCYL1 and SCYL2. Interacts with TGFBR1 and TGFBR2. Interacts with PIP5K1C; clathrin competes with PIP5K1C. Interacts with DENND1B. Interacts with FCHO1. Interacts with RFTN1. Interacts with KIAA1107. Together with AP2A1 or AP2A2 and AP2M1, it interacts with ADAM10; this interaction facilitates ADAM10 endocytosis from the plasma membrane during long-term potentiation in hippocampal neurons. In terms of tissue distribution, expressed in the brain (at protein level).

It localises to the cell membrane. The protein resides in the membrane. The protein localises to the coated pit. Its function is as follows. Component of the adaptor protein complex 2 (AP-2). Adaptor protein complexes function in protein transport via transport vesicles in different membrane traffic pathways. Adaptor protein complexes are vesicle coat components and appear to be involved in cargo selection and vesicle formation. AP-2 is involved in clathrin-dependent endocytosis in which cargo proteins are incorporated into vesicles surrounded by clathrin (clathrin-coated vesicles, CCVs) which are destined for fusion with the early endosome. The clathrin lattice serves as a mechanical scaffold but is itself unable to bind directly to membrane components. Clathrin-associated adaptor protein (AP) complexes which can bind directly to both the clathrin lattice and to the lipid and protein components of membranes are considered to be the major clathrin adaptors contributing the CCV formation. AP-2 also serves as a cargo receptor to selectively sort the membrane proteins involved in receptor-mediated endocytosis. AP-2 seems to play a role in the recycling of synaptic vesicle membranes from the presynaptic surface. AP-2 recognizes Y-X-X-[FILMV] (Y-X-X-Phi) and [ED]-X-X-X-L-[LI] endocytosis signal motifs within the cytosolic tails of transmembrane cargo molecules. AP-2 may also play a role in maintaining normal post-endocytic trafficking through the ARF6-regulated, non-clathrin pathway. During long-term potentiation in hippocampal neurons, AP-2 is responsible for the endocytosis of ADAM10. The AP-2 beta subunit acts via its C-terminal appendage domain as a scaffolding platform for endocytic accessory proteins; at least some clathrin-associated sorting proteins (CLASPs) are recognized by their [DE]-X(1,2)-F-X-X-[FL]-X-X-X-R motif. The AP-2 beta subunit binds to clathrin heavy chain, promoting clathrin lattice assembly; clathrin displaces at least some CLASPs from AP2B1 which probably then can be positioned for further coat assembly. The sequence is that of AP-2 complex subunit beta (Ap2b1) from Mus musculus (Mouse).